Here is a 382-residue protein sequence, read N- to C-terminus: Chaperone protein DnaJ 2 (382 aa).

Positions 4-68 (DYYGLLGVSK…DKRRIVDLGG (65 aa)) constitute a J domain. The segment at 132-214 (GVTKQVTVDT…CMGDGRIRAR (83 aa)) adopts a CR-type zinc-finger fold. Residues cysteine 145, cysteine 148, cysteine 162, cysteine 165, cysteine 188, cysteine 191, cysteine 202, and cysteine 205 each contribute to the Zn(2+) site. CXXCXGXG motif repeat units lie at residues 145–152 (CDRCQGKG), 162–169 (CDTCGGRG), 188–195 (CPTCRGVG), and 202–209 (CQQCMGDG).

It belongs to the DnaJ family. In terms of assembly, homodimer. Interacts with RNase J. Requires Zn(2+) as cofactor.

It localises to the cytoplasm. Its function is as follows. Participates actively in the response to hyperosmotic and heat shock by preventing the aggregation of stress-denatured proteins and by disaggregating proteins, also in an autonomous, DnaK-independent fashion. Unfolded proteins bind initially to DnaJ; upon interaction with the DnaJ-bound protein, DnaK hydrolyzes its bound ATP, resulting in the formation of a stable complex. GrpE releases ADP from DnaK; ATP binding to DnaK triggers the release of the substrate protein, thus completing the reaction cycle. Several rounds of ATP-dependent interactions between DnaJ, DnaK and GrpE are required for fully efficient folding. Also involved, together with DnaK and GrpE, in the DNA replication of plasmids through activation of initiation proteins. Inhibits the beta-lactamase and RNase activity of RNase J. This is Chaperone protein DnaJ 2 from Mycobacterium tuberculosis (strain ATCC 25618 / H37Rv).